The sequence spans 346 residues: Glycerol-3-phosphate dehydrogenase [NAD(P)+] (346 aa).

The NADPH site is built by Ser-11, Trp-12, His-32, Arg-33, and Lys-106. 3 residues coordinate sn-glycerol 3-phosphate: Lys-106, Gly-137, and Ser-139. Residue Ala-141 participates in NADPH binding. Sn-glycerol 3-phosphate contacts are provided by Lys-193, Asp-246, Ser-256, Arg-257, and Asn-258. Lys-193 acts as the Proton acceptor in catalysis. Arg-257 is an NADPH binding site. Residues Val-281 and Glu-283 each coordinate NADPH.

This sequence belongs to the NAD-dependent glycerol-3-phosphate dehydrogenase family.

Its subcellular location is the cytoplasm. It catalyses the reaction sn-glycerol 3-phosphate + NAD(+) = dihydroxyacetone phosphate + NADH + H(+). It carries out the reaction sn-glycerol 3-phosphate + NADP(+) = dihydroxyacetone phosphate + NADPH + H(+). It participates in membrane lipid metabolism; glycerophospholipid metabolism. In terms of biological role, catalyzes the reduction of the glycolytic intermediate dihydroxyacetone phosphate (DHAP) to sn-glycerol 3-phosphate (G3P), the key precursor for phospholipid synthesis. This is Glycerol-3-phosphate dehydrogenase [NAD(P)+] from Bacillus licheniformis (strain ATCC 14580 / DSM 13 / JCM 2505 / CCUG 7422 / NBRC 12200 / NCIMB 9375 / NCTC 10341 / NRRL NRS-1264 / Gibson 46).